The sequence spans 454 residues: tRNA modification GTPase MnmE (454 aa).

(6S)-5-formyl-5,6,7,8-tetrahydrofolate contacts are provided by arginine 23, glutamate 86, and arginine 125. The TrmE-type G domain occupies 221–376 (GLTLAIVGRP…LREQILRMVS (156 aa)). Position 231 (asparagine 231) interacts with K(+). Residues 231-236 (NVGKSS), 250-256 (TAIPGTT), and 275-278 (DTAG) each bind GTP. Mg(2+) is bound at residue serine 235. 3 residues coordinate K(+): threonine 250, isoleucine 252, and threonine 255. Threonine 256 contributes to the Mg(2+) binding site. Position 454 (lysine 454) interacts with (6S)-5-formyl-5,6,7,8-tetrahydrofolate.

This sequence belongs to the TRAFAC class TrmE-Era-EngA-EngB-Septin-like GTPase superfamily. TrmE GTPase family. In terms of assembly, homodimer. Heterotetramer of two MnmE and two MnmG subunits. The cofactor is K(+).

It localises to the cytoplasm. Its function is as follows. Exhibits a very high intrinsic GTPase hydrolysis rate. Involved in the addition of a carboxymethylaminomethyl (cmnm) group at the wobble position (U34) of certain tRNAs, forming tRNA-cmnm(5)s(2)U34. This is tRNA modification GTPase MnmE from Koribacter versatilis (strain Ellin345).